A 408-amino-acid chain; its full sequence is G patch domain-containing protein 4 (408 aa).

N-acetylmethionine is present on methionine 1. Threonine 4 is subject to Phosphothreonine. Residues 11–57 (GMKFAEEQLLKHGWTQGKGLGRKENGITQALRVTLKQDTYGVGHDPA) enclose the G-patch domain. A Glycyl lysine isopeptide (Lys-Gly) (interchain with G-Cter in SUMO2) cross-link involves residue lysine 46. A Phosphothreonine modification is found at threonine 116. 2 disordered regions span residues 116–141 (TSSG…KPPN) and 187–408 (GQDP…KKRD). Phosphoserine is present on residues serine 128 and serine 130. Composition is skewed to basic and acidic residues over residues 222–236 (RSAE…ESIR), 245–257 (HQEE…REGT), and 274–283 (LKNREHVDRS). The segment covering 340 to 354 (EEDLNTEDEEVEEAL) has biased composition (acidic residues). Residues 358–372 (GTREAESRSCSDQKR) are compositionally biased toward basic and acidic residues. Over residues 398 to 408 (KAKKKKQKKRD) the composition is skewed to basic residues.

The chain is G patch domain-containing protein 4 (GPATCH4) from Bos taurus (Bovine).